Consider the following 204-residue polypeptide: ATP-dependent Clp protease proteolytic subunit (204 aa).

Ser101 functions as the Nucleophile in the catalytic mechanism. His126 is an active-site residue.

Belongs to the peptidase S14 family. Component of the chloroplastic Clp protease core complex.

The protein localises to the plastid. Its subcellular location is the chloroplast stroma. The catalysed reaction is Hydrolysis of proteins to small peptides in the presence of ATP and magnesium. alpha-casein is the usual test substrate. In the absence of ATP, only oligopeptides shorter than five residues are hydrolyzed (such as succinyl-Leu-Tyr-|-NHMec, and Leu-Tyr-Leu-|-Tyr-Trp, in which cleavage of the -Tyr-|-Leu- and -Tyr-|-Trp bonds also occurs).. In terms of biological role, cleaves peptides in various proteins in a process that requires ATP hydrolysis. Has a chymotrypsin-like activity. Plays a major role in the degradation of misfolded proteins. The chain is ATP-dependent Clp protease proteolytic subunit from Anthoceros angustus (Hornwort).